We begin with the raw amino-acid sequence, 848 residues long: Paramyosin (848 aa).

A nonhelical region region spans residues 1–9 (AFGSMSVAD). Residues 10 to 833 (LGSLTRLEDK…HLIRAKHRSS (824 aa)) are a coiled coil. Residues 834–848 (VVTGKNASASKIYVL) form a nonhelical region region.

It belongs to the paramyosin family. Homodimer.

The protein localises to the cytoplasm. Its subcellular location is the myofibril. Paramyosin is a major structural component of many thick filaments isolated from invertebrate muscles. The chain is Paramyosin from Dirofilaria immitis (Canine heartworm).